A 295-amino-acid polypeptide reads, in one-letter code: Alpha-ketoglutarate-dependent sulfate ester dioxygenase (295 aa).

His71 serves as a coordination point for substrate. Residues His98 and Asp100 each contribute to the Fe cation site. Val101 provides a ligand contact to substrate. Thr125 lines the 2-oxoglutarate pocket. His252 is a binding site for Fe cation. 2 residues coordinate 2-oxoglutarate: Arg263 and Arg267.

It belongs to the TfdA dioxygenase family. It depends on Fe(2+) as a cofactor.

The enzyme catalyses a primary linear alkyl sulfate ester + 2-oxoglutarate + O2 = an aldehyde + sulfate + succinate + CO2 + H(+). It catalyses the reaction 2-ethylhexyl sulfate + 2-oxoglutarate + O2 = 2-ethylhexanal + sulfate + succinate + CO2 + H(+). It carries out the reaction hexyl sulfate + 2-oxoglutarate + O2 = hexanal + sulfate + succinate + CO2 + H(+). The catalysed reaction is pentyl sulfate + 2-oxoglutarate + O2 = pentanal + sulfate + succinate + CO2 + H(+). The enzyme catalyses heptyl sulfate + 2-oxoglutarate + O2 = heptanal + sulfate + succinate + CO2 + H(+). Its function is as follows. Alpha-ketoglutarate-dependent sulfate ester dioxygenase, which oxidizes medium-chain alkyl-sulfate esters. Shows preference for 2-ethylhexyl sulfate (2-EHS) in vitro, leading to the formation of succinate and 2-ethylhexanal. Has likely a role in sulfate scavenging in vivo. Functionally, also causes the inactivation of the 2-carboxyquinoxaline Ty38c (an antitubercular compound that inhibits DprE1) via oxidative decarboxylation, using Ty38c instead of alpha-ketoglutarate as a substrate. Is thus responsible for primary resistance of M.tuberculosis to Ty38c in vitro. Overexpression of Rv3406 causes resistance to Ty38c. This is Alpha-ketoglutarate-dependent sulfate ester dioxygenase from Mycobacterium tuberculosis (strain ATCC 25618 / H37Rv).